We begin with the raw amino-acid sequence, 228 residues long: Cytochrome c oxidase subunit 2 (228 aa).

Residues 1-26 (MATWANLGLQNSSSPLMEQLNFFHDH) are Mitochondrial intermembrane-facing. Residues 27–48 (TLLILIMITVMIAYIMFMLFFN) traverse the membrane as a helical segment. Topologically, residues 49–62 (KFTNRYLLHGQTIE) are mitochondrial matrix. A helical transmembrane segment spans residues 63 to 82 (IIWTILPAIILMFIAFPSLR). Residues 83 to 228 (LLYLMDEINS…FIKWISSQMN (146 aa)) lie on the Mitochondrial intermembrane side of the membrane. Residues His-161, Cys-196, Glu-198, Cys-200, His-204, and Met-207 each coordinate Cu cation. Glu-198 contacts Mg(2+).

The protein belongs to the cytochrome c oxidase subunit 2 family. Component of the cytochrome c oxidase (complex IV, CIV), a multisubunit enzyme composed of a catalytic core of 3 subunits and several supernumerary subunits. The complex exists as a monomer or a dimer and forms supercomplexes (SCs) in the inner mitochondrial membrane with ubiquinol-cytochrome c oxidoreductase (cytochrome b-c1 complex, complex III, CIII). The cofactor is Cu cation.

The protein localises to the mitochondrion inner membrane. The catalysed reaction is 4 Fe(II)-[cytochrome c] + O2 + 8 H(+)(in) = 4 Fe(III)-[cytochrome c] + 2 H2O + 4 H(+)(out). Component of the cytochrome c oxidase, the last enzyme in the mitochondrial electron transport chain which drives oxidative phosphorylation. The respiratory chain contains 3 multisubunit complexes succinate dehydrogenase (complex II, CII), ubiquinol-cytochrome c oxidoreductase (cytochrome b-c1 complex, complex III, CIII) and cytochrome c oxidase (complex IV, CIV), that cooperate to transfer electrons derived from NADH and succinate to molecular oxygen, creating an electrochemical gradient over the inner membrane that drives transmembrane transport and the ATP synthase. Cytochrome c oxidase is the component of the respiratory chain that catalyzes the reduction of oxygen to water. Electrons originating from reduced cytochrome c in the intermembrane space (IMS) are transferred via the dinuclear copper A center (CU(A)) of subunit 2 and heme A of subunit 1 to the active site in subunit 1, a binuclear center (BNC) formed by heme A3 and copper B (CU(B)). The BNC reduces molecular oxygen to 2 water molecules using 4 electrons from cytochrome c in the IMS and 4 protons from the mitochondrial matrix. This is Cytochrome c oxidase subunit 2 (COII) from Aedes aegypti (Yellowfever mosquito).